We begin with the raw amino-acid sequence, 660 residues long: Arginine--tRNA ligase, cytoplasmic (660 aa).

Residues 1–72 form a could be involved in the assembly of the multisynthetase complex region; sequence MELPVCFYEE…LEEKKKSSKS (72 aa). L-arginine is bound by residues 200–202, His-211, Tyr-384, Asp-388, and Gln-412; that span reads SPN. The short motif at 201–212 is the 'HIGH' region element; it reads PNIAKEMHVGHL. Residues 529-543 form an interaction with tRNA region; it reads NTAAYLLYAYTRIRS.

The protein belongs to the class-I aminoacyl-tRNA synthetase family. In terms of assembly, monomer; also part of a multisubunit complex that groups tRNA ligases for Arg, Asp, Glu, Gln, Ile, Leu, Lys, Met and Pro.

It localises to the cytoplasm. The protein localises to the cytosol. The catalysed reaction is tRNA(Arg) + L-arginine + ATP = L-arginyl-tRNA(Arg) + AMP + diphosphate. Its function is as follows. Forms part of a macromolecular complex that catalyzes the attachment of specific amino acids to cognate tRNAs during protein synthesis. The polypeptide is Arginine--tRNA ligase, cytoplasmic (rars1) (Xenopus tropicalis (Western clawed frog)).